The primary structure comprises 444 residues: DNA repair protein RadA (444 aa).

Residues 8–25 (CSNCGNISPKWSGQCFDC) form a C4-type zinc finger. An ATP-binding site is contributed by 89–96 (GDPGIGKS). The RadA KNRFG motif motif lies at 248 to 252 (KNRFG). A lon-protease-like region spans residues 347-444 (EVYLSIAGGL…HLKDLKEIIK (98 aa)).

It belongs to the RecA family. RadA subfamily.

In terms of biological role, DNA-dependent ATPase involved in processing of recombination intermediates, plays a role in repairing DNA breaks. Stimulates the branch migration of RecA-mediated strand transfer reactions, allowing the 3' invading strand to extend heteroduplex DNA faster. Binds ssDNA in the presence of ADP but not other nucleotides, has ATPase activity that is stimulated by ssDNA and various branched DNA structures, but inhibited by SSB. Does not have RecA's homology-searching function. The polypeptide is DNA repair protein RadA (Rickettsia conorii (strain ATCC VR-613 / Malish 7)).